Here is a 271-residue protein sequence, read N- to C-terminus: HTH-type transcriptional repressor AllR (271 aa).

Residues 21 to 83 (AQALERGIAI…SQLGWWHIGL (63 aa)) enclose the HTH iclR-type domain. Residues 43-62 (VSDISLNLDLPLSTTFRLLK) constitute a DNA-binding region (H-T-H motif). Residues 98–267 (VLSVAGPFMR…ARDISTALGL (170 aa)) enclose the IclR-ED domain. Glyoxylate-binding positions include 154-156 (SGA), aspartate 207, cysteine 217, and 234-236 (SIS).

Its function is as follows. Negative regulator of allantoin and glyoxylate utilization operons. Binds to the gcl promoter and to the allS-allA intergenic region. In Escherichia coli (strain UTI89 / UPEC), this protein is HTH-type transcriptional repressor AllR (allR).